The sequence spans 420 residues: L-rhamnose isomerase (420 aa).

Positions 264, 296, and 298 each coordinate Mn(2+).

It belongs to the rhamnose isomerase family. Mn(2+) serves as cofactor.

It localises to the cytoplasm. The catalysed reaction is L-rhamnopyranose = L-rhamnulose. The protein operates within carbohydrate degradation; L-rhamnose degradation; glycerone phosphate from L-rhamnose: step 1/3. Catalyzes the interconversion of L-rhamnose and L-rhamnulose. This Listeria monocytogenes serovar 1/2a (strain ATCC BAA-679 / EGD-e) protein is L-rhamnose isomerase.